The sequence spans 267 residues: Integral membrane protein 2C (267 aa).

T37 is modified (phosphothreonine). The helical; Signal-anchor for type II membrane protein transmembrane segment at 55-75 (VGGVCYLSMGMVVLLMGLVFA) threads the bilayer. In terms of domain architecture, BRICHOS spans 136–230 (FGGGDPADII…LCNGKDTYRL (95 aa)). C163 and C222 form a disulfide bridge. A glycan (N-linked (GlcNAc...) asparagine) is linked at N169.

This sequence belongs to the ITM2 family. Interacts with BACE1. Interacts with APP. Interacts with STMN2. Type I membrane-bound, as well as soluble, furin has a pre-eminent role in ITM2C proteolytic processing. PCSK7 and PCSK5 may also be involved although to a lesser extent. The soluble form of PCSK7 is incapable of processing ITM2C. Fails to undergo shedding by ADAM10 and intramembrane cleavage by SPPL2B.

It is found in the lysosome membrane. The protein localises to the cell membrane. Functionally, negative regulator of amyloid-beta peptide production. May inhibit the processing of APP by blocking its access to alpha- and beta-secretase. Binding to the beta-secretase-cleaved APP C-terminal fragment is negligible, suggesting that ITM2C is a poor gamma-secretase cleavage inhibitor. May play a role in TNF-induced cell death and neuronal differentiation. The sequence is that of Integral membrane protein 2C (ITM2C) from Macaca fascicularis (Crab-eating macaque).